The chain runs to 84 residues: Transcriptional regulator WhiB1 (84 aa).

In terms of domain architecture, 4Fe-4S Wbl-type spans 8–70; the sequence is VCRDEDPELF…GGMSEDERRA (63 aa). Residues Cys9, Cys37, Cys40, and Cys46 each coordinate [4Fe-4S] cluster.

Belongs to the WhiB family. As to quaternary structure, homodimer. [4Fe-4S] cluster is required as a cofactor. The Fe-S cluster can be nitrosylated by nitric oxide (NO). In terms of processing, upon Fe-S cluster removal intramolecular disulfide bonds are formed.

The protein resides in the cytoplasm. Functionally, acts as a transcriptional regulator. Probably redox-responsive. The apo- but not holo-form probably binds DNA. This Mycobacterium tuberculosis (strain CDC 1551 / Oshkosh) protein is Transcriptional regulator WhiB1 (whiB1).